The following is a 283-amino-acid chain: Thymidylate synthase (283 aa).

DUMP is bound at residue Arg-22. Catalysis depends on Cys-160, which acts as the Nucleophile. DUMP-binding positions include 180–183 (RSCD), Asn-191, and 221–223 (HIY). Asp-183 contacts (6R)-5,10-methylene-5,6,7,8-tetrahydrofolate. A (6R)-5,10-methylene-5,6,7,8-tetrahydrofolate-binding site is contributed by Ser-282.

The protein belongs to the thymidylate synthase family. Bacterial-type ThyA subfamily. As to quaternary structure, homodimer.

It localises to the cytoplasm. It carries out the reaction dUMP + (6R)-5,10-methylene-5,6,7,8-tetrahydrofolate = 7,8-dihydrofolate + dTMP. The protein operates within pyrimidine metabolism; dTTP biosynthesis. In terms of biological role, catalyzes the reductive methylation of 2'-deoxyuridine-5'-monophosphate (dUMP) to 2'-deoxythymidine-5'-monophosphate (dTMP) while utilizing 5,10-methylenetetrahydrofolate (mTHF) as the methyl donor and reductant in the reaction, yielding dihydrofolate (DHF) as a by-product. This enzymatic reaction provides an intracellular de novo source of dTMP, an essential precursor for DNA biosynthesis. This chain is Thymidylate synthase, found in Aliivibrio fischeri (strain ATCC 700601 / ES114) (Vibrio fischeri).